A 148-amino-acid polypeptide reads, in one-letter code: Large ribosomal subunit protein bL9 (148 aa).

The protein belongs to the bacterial ribosomal protein bL9 family.

Its function is as follows. Binds to the 23S rRNA. This chain is Large ribosomal subunit protein bL9, found in Bifidobacterium longum (strain DJO10A).